The sequence spans 100 residues: UPF0473 protein lwe1514 (100 aa).

The protein belongs to the UPF0473 family.

This chain is UPF0473 protein lwe1514, found in Listeria welshimeri serovar 6b (strain ATCC 35897 / DSM 20650 / CCUG 15529 / CIP 8149 / NCTC 11857 / SLCC 5334 / V8).